Here is a 177-residue protein sequence, read N- to C-terminus: Apoptosis regulatory protein Siva (177 aa).

Tyrosine 34 carries the phosphotyrosine; by ABL2 modification. The interaction with BCL2L1 isoform Bcl-x(L) and inhibition of BCL2L1 anti-apoptotic activity stretch occupies residues 36–55; it reads REVFERTKQLLFQGAQAYRD.

In terms of assembly, binds through its N-terminal region to the C-terminus of CD27 and to PXMP2/PMP22. Binds to the C-terminus of TNFRSF18/GITR. Binds to BCL2L1/BCLX isoform Bcl-x(L) but not to BAX. Zn(2+) is required as a cofactor. In post-ischemic kidney, found in cells lining the S3 segment of proximal tubules at 12 hours and 1 day post-ischemia. At five and seven days post-ischemia, found in epithelial cells of papillary proliferations in regenerating tubules.

Its subcellular location is the cytoplasm. It localises to the nucleus. Functionally, induces CD27-mediated apoptosis. Inhibits BCL2L1 isoform Bcl-x(L) anti-apoptotic activity. Inhibits activation of NF-kappa-B and promotes T-cell receptor-mediated apoptosis. The sequence is that of Apoptosis regulatory protein Siva (Siva1) from Rattus norvegicus (Rat).